The sequence spans 187 residues: UPF0301 protein Clim_0777 (187 aa).

The protein belongs to the UPF0301 (AlgH) family.

The chain is UPF0301 protein Clim_0777 from Chlorobium limicola (strain DSM 245 / NBRC 103803 / 6330).